A 459-amino-acid polypeptide reads, in one-letter code: MAPKKHSGFMMFVNEWRNRNAEGRRMTLAQAVSHCGTIWEKMNTQQRGPYNSGGKDANVAQRAKRESSNGHGQVDKAQREATESLMDMKRTIERLVLNAKMSHDLENAKFVFVAFNYFTKALTTDVYVPAEFAACEYSLKEGIRSIYSTMIDPGQIIFGQGSDALLHSSTTHDLPLPPNALGEKNMTKLYRNIVDYLSKCQGKGKTLVVFTPAENITMVKSCFRYLECDDDFRDGGEKIQVFDIQYLLFILKKEVMNVADLNDEKINKFATDAFFKKDFFEFTAGIACQYHEDNDRTKYCTQSMVTRWAYTFTDFMCGDLAITVQPGKHIPAQTKPNYLIISSYASSLDHESSFDSFYSLPGSGVKKESQPEACSLSSSRLSVASSSYKPIDHTSFAANLNEVSEFPSLGMRNSSKHHGIAASAQREWNARNLPTHSRLIRKVSDNDFSVNGADGKLKK.

Residues 2–69 (APKKHSGFMM…AQRAKRESSN (68 aa)) constitute a DNA-binding region (HMG box). The tract at residues 43–78 (NTQQRGPYNSGGKDANVAQRAKRESSNGHGQVDKAQ) is disordered. Positions 63-78 (AKRESSNGHGQVDKAQ) are enriched in basic and acidic residues.

Belongs to the maelstrom family. In terms of tissue distribution, in germaria and egg chambers, it is detected in the germline. In the germarium, it is in all regions, including region I where the germ cells are dividing. In early egg chambers, it is uniformly distributed throughout the nurse cells and oocyte but, by stage 5, it is most concentrated around the outer margins of the cells, closest to the periphery of the egg chamber. Level decreases in stages 5 and 6, but most noticeably in the oocyte, where protein level remains. No detectable protein from stage 8 onward (at protein level).

It localises to the cytoplasm. It is found in the nucleus. The protein resides in the perinuclear region. Its subcellular location is the cytoplasmic ribonucleoprotein granule. In terms of biological role, involved both in the piRNA and miRNA metabolic processes. As a component of the meiotic nuage, plays a central role during oogenesis by repressing transposable elements and preventing their mobilization, which is essential for the germline integrity. Repression of transposable elements is mediated via the piRNA metabolic process, which mediates the repression of transposable elements during meiosis by forming complexes composed of piRNAs and Piwi proteins and governs the repression of transposons. As a nuclear component, it is required for proper differentiation in the germline stem cell (GSC) lineage by repressing microRNA-7 (miR-7), thereby acting as an indirect regulator of bag-of-marbles (Bam). Acts by binding to the promoter of miR-7 gene and repressing its expression; miR-7 repression alleviates the Bam repression by miR-7, thereby allowing differentiation in the germline stem cell (GSC) lineage. Indirectly required to position the microtubule organizing center in stage 2-6 oocytes. Involved in repression of long interspersed nuclear elements (LINEs) including HeT-A, I-element, TART and possibly mst40 LINEs; may have a role in production of piwi-interacting RNA (piRNA). This Drosophila melanogaster (Fruit fly) protein is Protein maelstrom.